The chain runs to 263 residues: Zinc import ATP-binding protein ZnuC (263 aa).

Residues 11-226 (VELKNINVVF…PTFIHFFGDQ (216 aa)) enclose the ABC transporter domain. Position 43–50 (43–50 (GPNGGGKS)) interacts with ATP.

Belongs to the ABC transporter superfamily. Zinc importer (TC 3.A.1.15.5) family. The complex is composed of two ATP-binding proteins (ZnuC), two transmembrane proteins (ZnuB) and a solute-binding protein (ZnuA).

The protein localises to the cell inner membrane. It catalyses the reaction Zn(2+)(out) + ATP(in) + H2O(in) = Zn(2+)(in) + ADP(in) + phosphate(in) + H(+)(in). In terms of biological role, part of the ABC transporter complex ZnuABC involved in zinc import. Responsible for energy coupling to the transport system. In Pasteurella multocida (strain Pm70), this protein is Zinc import ATP-binding protein ZnuC.